Here is a 162-residue protein sequence, read N- to C-terminus: Large ribosomal subunit protein uL10 (162 aa).

This sequence belongs to the universal ribosomal protein uL10 family. In terms of assembly, part of the ribosomal stalk of the 50S ribosomal subunit. The N-terminus interacts with L11 and the large rRNA to form the base of the stalk. The C-terminus forms an elongated spine to which L12 dimers bind in a sequential fashion forming a multimeric L10(L12)X complex.

Its function is as follows. Forms part of the ribosomal stalk, playing a central role in the interaction of the ribosome with GTP-bound translation factors. The polypeptide is Large ribosomal subunit protein uL10 (Borrelia garinii subsp. bavariensis (strain ATCC BAA-2496 / DSM 23469 / PBi) (Borreliella bavariensis)).